Here is an 856-residue protein sequence, read N- to C-terminus: DNA mismatch repair protein MutS (856 aa).

An ATP-binding site is contributed by Gly623–Ser630.

The protein belongs to the DNA mismatch repair MutS family.

Functionally, this protein is involved in the repair of mismatches in DNA. It is possible that it carries out the mismatch recognition step. This protein has a weak ATPase activity. This Natronomonas pharaonis (strain ATCC 35678 / DSM 2160 / CIP 103997 / JCM 8858 / NBRC 14720 / NCIMB 2260 / Gabara) (Halobacterium pharaonis) protein is DNA mismatch repair protein MutS.